The primary structure comprises 277 residues: Formamidopyrimidine-DNA glycosylase (277 aa).

Proline 2 (schiff-base intermediate with DNA) is an active-site residue. Glutamate 3 acts as the Proton donor in catalysis. Lysine 58 serves as the catalytic Proton donor; for beta-elimination activity. 3 residues coordinate DNA: histidine 94, arginine 113, and arginine 156. The FPG-type zinc-finger motif lies at 241 to 277 (LVYGREGVPCPNCGAEHPIQRITQAGRSTFFCPTCQK). Arginine 267 functions as the Proton donor; for delta-elimination activity in the catalytic mechanism.

It belongs to the FPG family. In terms of assembly, monomer. Requires Zn(2+) as cofactor.

The catalysed reaction is Hydrolysis of DNA containing ring-opened 7-methylguanine residues, releasing 2,6-diamino-4-hydroxy-5-(N-methyl)formamidopyrimidine.. The enzyme catalyses 2'-deoxyribonucleotide-(2'-deoxyribose 5'-phosphate)-2'-deoxyribonucleotide-DNA = a 3'-end 2'-deoxyribonucleotide-(2,3-dehydro-2,3-deoxyribose 5'-phosphate)-DNA + a 5'-end 5'-phospho-2'-deoxyribonucleoside-DNA + H(+). Involved in base excision repair of DNA damaged by oxidation or by mutagenic agents. Acts as a DNA glycosylase that recognizes and removes damaged bases. Has a preference for oxidized purines, such as 7,8-dihydro-8-oxoguanine (8-oxoG). Has AP (apurinic/apyrimidinic) lyase activity and introduces nicks in the DNA strand. Cleaves the DNA backbone by beta-delta elimination to generate a single-strand break at the site of the removed base with both 3'- and 5'-phosphates. The chain is Formamidopyrimidine-DNA glycosylase from Gluconobacter oxydans (strain 621H) (Gluconobacter suboxydans).